A 253-amino-acid chain; its full sequence is Small ribosomal subunit protein uS2 (253 aa).

Belongs to the universal ribosomal protein uS2 family.

This Parvibaculum lavamentivorans (strain DS-1 / DSM 13023 / NCIMB 13966) protein is Small ribosomal subunit protein uS2.